The primary structure comprises 279 residues: Glutamate racemase (279 aa).

Substrate contacts are provided by residues Asp-13–Ser-14 and Tyr-45–Gly-46. Cys-76 acts as the Proton donor/acceptor in catalysis. A substrate-binding site is contributed by Asn-77–Thr-78. Catalysis depends on Cys-185, which acts as the Proton donor/acceptor. Thr-186–His-187 provides a ligand contact to substrate.

Belongs to the aspartate/glutamate racemases family.

The enzyme catalyses L-glutamate = D-glutamate. It participates in cell wall biogenesis; peptidoglycan biosynthesis. Provides the (R)-glutamate required for cell wall biosynthesis. This Picosynechococcus sp. (strain ATCC 27264 / PCC 7002 / PR-6) (Agmenellum quadruplicatum) protein is Glutamate racemase.